Here is a 300-residue protein sequence, read N- to C-terminus: Matrix protein (300 aa).

The tract at residues 1–36 is disordered; the sequence is MHMFPLGVVEDSDPPGPPIGRASGSPPPGAGRSTAK.

As to quaternary structure, homodimer. Dimerization is critical for virion formation. Interacts with host ANP32B.

It is found in the virion. The protein localises to the host cell membrane. Its function is as follows. The M protein has a crucial role in virus assembly and interacts with the RNP complex as well as with the viral membrane. Associates with phosphatidylserine (PS) and phosphatidylinositol 4,5-bisphosphate (PIP2) at the plasma membrane. Interaction with PIP2 triggers matrix protein lattice polymerization. Matrix proteins induce host membrane deformation and curvature necessary for virion assembly/budding. The polypeptide is Matrix protein (M) (Measles virus (strain Yamagata-1) (MeV)).